Consider the following 449-residue polypeptide: Aminopeptidase C (449 aa).

Residues C70, H364, and N385 contribute to the active site.

The protein belongs to the peptidase C1 family. As to quaternary structure, homohexamer.

It is found in the cytoplasm. It catalyses the reaction Inactivates bleomycin B2 (a cytotoxic glycometallopeptide) by hydrolysis of a carboxyamide bond of beta-aminoalanine, but also shows general aminopeptidase activity. The specificity varies somewhat with source, but amino acid arylamides of Met, Leu and Ala are preferred.. The chain is Aminopeptidase C (pepC) from Lactobacillus delbrueckii subsp. lactis.